The chain runs to 352 residues: DNA integrity scanning protein DisA (352 aa).

The region spanning 3–143 (PQELIEKIKL…NYKYVVNQVD (141 aa)) is the DAC domain. ATP is bound by residues G71, L89, and 102–106 (TRHRT).

This sequence belongs to the DisA family. In terms of assembly, homooctamer. The cofactor is Mg(2+).

It carries out the reaction 2 ATP = 3',3'-c-di-AMP + 2 diphosphate. Participates in a DNA-damage check-point. DisA forms globular foci that rapidly scan along the chromosomes searching for lesions. Functionally, also has diadenylate cyclase activity, catalyzing the condensation of 2 ATP molecules into cyclic di-AMP (c-di-AMP). c-di-AMP likely acts as a signaling molecule that may couple DNA integrity with a cellular process. In Thermotoga petrophila (strain ATCC BAA-488 / DSM 13995 / JCM 10881 / RKU-1), this protein is DNA integrity scanning protein DisA.